We begin with the raw amino-acid sequence, 352 residues long: Uroporphyrinogen decarboxylase (352 aa).

Residues 27 to 31 (RQAGR), D77, Y154, T209, and H325 each bind substrate.

The protein belongs to the uroporphyrinogen decarboxylase family. As to quaternary structure, homodimer.

It localises to the cytoplasm. It catalyses the reaction uroporphyrinogen III + 4 H(+) = coproporphyrinogen III + 4 CO2. It participates in porphyrin-containing compound metabolism; protoporphyrin-IX biosynthesis; coproporphyrinogen-III from 5-aminolevulinate: step 4/4. Its function is as follows. Catalyzes the decarboxylation of four acetate groups of uroporphyrinogen-III to yield coproporphyrinogen-III. In Legionella pneumophila (strain Corby), this protein is Uroporphyrinogen decarboxylase.